A 293-amino-acid chain; its full sequence is MKDKIVRATAKDGMVRIIAGITTNLVNEGCKIHECTPVASAALGRMLTAGTLIGTTLKSEKEVVTLKINGNGEINGITVTAHSDASVKGFIGNPYVDRPLNEKGKLDVGGAIGTDGILYVIKDLGLRDPYIGQVPIQTGEIAEDFAYYFTASEQTPSAVSLGVLVDRDLSIKAAGGFIVQMMPGADELLADVITYRLEEIPPITTLISEGKTIEEILEYIFDGMDLKVLDSLTPEYKCDCSRERVEKALISIGKETLQEIYDDKKNEEIVCNFCNTKYEFTNDEIGELLNNSR.

2 disulfide bridges follow: cysteine 238/cysteine 240 and cysteine 271/cysteine 274.

It belongs to the HSP33 family. Under oxidizing conditions two disulfide bonds are formed involving the reactive cysteines. Under reducing conditions zinc is bound to the reactive cysteines and the protein is inactive.

It is found in the cytoplasm. Its function is as follows. Redox regulated molecular chaperone. Protects both thermally unfolding and oxidatively damaged proteins from irreversible aggregation. Plays an important role in the bacterial defense system toward oxidative stress. The chain is 33 kDa chaperonin from Clostridium beijerinckii (strain ATCC 51743 / NCIMB 8052) (Clostridium acetobutylicum).